Consider the following 231-residue polypeptide: FFQWSATVECHFLNGTERVRFLVRHVYNRQQYVHFDSDVGLFVADTVLGEPSAKLFNSQPDVLEKNRAAVEMLCNYNYEIVAPLTLQRREPKVRIFALQSGSLPQTDRLACYVTGFYPPEIEVKWFQNGQEETERVVSTDVIQNGDWTYQVLVVLEISPRHGDSYVCQVEHTSLQQPITQRWEPPGDVSRSKLLMGVGGFVLGLVYLALGIFFFLCSKKGQPDPTSPGILN.

The segment at 1-89 (FFQWSATVEC…IVAPLTLQRR (89 aa)) is beta-1. Over 1–194 (FFQWSATVEC…PGDVSRSKLL (194 aa)) the chain is Extracellular. Intrachain disulfides connect cysteine 10-cysteine 74 and cysteine 111-cysteine 167. Asparagine 14 is a glycosylation site (N-linked (GlcNAc...) asparagine). Positions 90–182 (EPKVRIFALQ…SLQQPITQRW (93 aa)) are beta-2. The Ig-like C1-type domain occupies 91-179 (PKVRIFALQS…EHTSLQQPIT (89 aa)). The segment at 183–194 (EPPGDVSRSKLL) is connecting peptide. Residues 195–219 (MGVGGFVLGLVYLALGIFFFLCSKK) traverse the membrane as a helical segment. Residues 220-231 (GQPDPTSPGILN) lie on the Cytoplasmic side of the membrane.

The protein belongs to the MHC class II family.

The protein localises to the membrane. The chain is Class II histocompatibility antigen, B-L beta chain from Gallus gallus (Chicken).